A 715-amino-acid chain; its full sequence is Tensin-4 (715 aa).

The signal sequence occupies residues 1–18 (MSQVMSSPLLAGGHAVSL). Serine 82 carries the phosphoserine modification. 4 disordered regions span residues 159-183 (RCHD…RSGG), 195-251 (RSSS…SPLV), 291-364 (SLLH…CPPS), and 376-435 (LING…ARDM). Polar residues predominate over residues 197–206 (SSESLIFSGN). Residue serine 248 is modified to Phosphoserine. Residues 291 to 325 (SLLHSSNSSHQSSSRSLESPANSSSSLHSLGSVSL) are compositionally biased toward low complexity. The region spanning 449-556 (WFKPNITREQ…ALPCKLTIPQ (108 aa)) is the SH2 domain. The PTB domain maps to 582-705 (CHTLYLSSVS…QPASQVIGLV (124 aa)).

The protein belongs to the PTEN phosphatase protein family. In terms of assembly, interacts (via SH2 domain) with Rho GTPase-activating protein DLC1 (via C-terminus); the interaction is independent of DLC1 tyrosine phosphorylation. Interacts with integrin ITGB1; the interaction displaces tensin TNS3 from the ITGB1 cytoplasmic tail and promotes ITGB1 stability. Interacts (via SH2 domain) with E3 ubiquitin-protein ligase CBL (phosphorylated on 'Tyr-774'); the interaction is enhanced in the presence of EGF and reduces interaction of CBL with EGFR. Interacts (via SH2 domain) with receptor tyrosine kinase MET (when phosphorylated); the interaction increases MET protein stability. Post-translationally, proteolytically cleaved by caspase-3 during apoptosis. In terms of tissue distribution, expressed at low levels in colon (at protein level). Expressed in prostate and placenta.

Its subcellular location is the cell junction. The protein localises to the focal adhesion. The protein resides in the cytoplasm. It localises to the cytoskeleton. Promotes EGF-induced cell migration by displacing tensin TNS3 from the cytoplasmic tail of integrin ITGB1 which results in dissociation of TNS3 from focal adhesions, disassembly of actin stress fibers and initiation of cell migration. Suppresses ligand-induced degradation of EGFR by reducing EGFR ubiquitination in the presence of EGF. Increases MET protein stability by inhibiting MET endocytosis and subsequent lysosomal degradation which leads to increased cell survival, proliferation and migration. This is Tensin-4 (TNS4) from Homo sapiens (Human).